Reading from the N-terminus, the 202-residue chain is Probable GTP-binding protein EngB (202 aa).

The EngB-type G domain occupies 30-201 (NILQIALAGR…WERIQYTIDS (172 aa)). GTP-binding positions include 38-45 (GRSNVGKS), 65-69 (GKTRS), 84-87 (DLPG), 151-154 (TKID), and 180-182 (VSS). Mg(2+) contacts are provided by serine 45 and threonine 67.

This sequence belongs to the TRAFAC class TrmE-Era-EngA-EngB-Septin-like GTPase superfamily. EngB GTPase family. Requires Mg(2+) as cofactor.

Functionally, necessary for normal cell division and for the maintenance of normal septation. This is Probable GTP-binding protein EngB from Lawsonia intracellularis (strain PHE/MN1-00).